We begin with the raw amino-acid sequence, 99 residues long: DNA-directed RNA polymerase subunit omega (99 aa).

Belongs to the RNA polymerase subunit omega family. The RNAP catalytic core consists of 2 alpha, 1 beta, 1 beta' and 1 omega subunit. When a sigma factor is associated with the core the holoenzyme is formed, which can initiate transcription.

It catalyses the reaction RNA(n) + a ribonucleoside 5'-triphosphate = RNA(n+1) + diphosphate. In terms of biological role, promotes RNA polymerase assembly. Latches the N- and C-terminal regions of the beta' subunit thereby facilitating its interaction with the beta and alpha subunits. The protein is DNA-directed RNA polymerase subunit omega of Xanthomonas axonopodis pv. citri (strain 306).